The primary structure comprises 165 residues: HTH-type transcriptional regulator IscR (165 aa).

The region spanning 2–131 is the HTH rrf2-type domain; sequence RLTSKGRYAV…NNITLAELVS (130 aa). The segment at residues 28–51 is a DNA-binding region (H-T-H motif); the sequence is LAEISERQGISLSYLEQLFSRLRK. C92, C98, and C104 together coordinate [2Fe-2S] cluster. Positions 144-165 are disordered; the sequence is NDTRRPLTNGRPQETINVNLHA. Residues 153 to 165 show a composition bias toward polar residues; that stretch reads GRPQETINVNLHA.

[2Fe-2S] cluster is required as a cofactor.

Regulates the transcription of several operons and genes involved in the biogenesis of Fe-S clusters and Fe-S-containing proteins. This Sodalis glossinidius (strain morsitans) protein is HTH-type transcriptional regulator IscR.